Consider the following 766-residue polypeptide: Pumilio domain-containing protein 12 (766 aa).

Disordered stretches follow at residues 63-98 (KKSSSTSVFDNDGTRDSLCSESSFGSQPAPKKKSKK) and 152-197 (AQEE…GDES). The span at 79 to 88 (SLCSESSFGS) shows a compositional bias: polar residues. The segment covering 179 to 193 (PADDENLESVDEQAG) has biased composition (acidic residues). A PUM-HD domain is found at 245-602 (ARAQKCKELW…LYAGITENLY (358 aa)). Pumilio repeat units follow at residues 313-348 (ELTPEIVRMSKNVYSKFFVKKMLKNGTKEQRDIIIN), 461-496 (SLKDKIPEFIHTPDGAKLAIKLIWFAPVKERKLIVK), 497-534 (NFKDLSVKAAMEHYGHRVLLALFDTVDDTVLLNKVIVS), and 535-571 (ELANEMKKLIEDDWGEKVIHYLVHPRDGRGIDKREIT).

This is Pumilio domain-containing protein 12 (puf-12) from Caenorhabditis elegans.